The sequence spans 121 residues: Small ribosomal subunit protein uS13 (121 aa).

A disordered region spans residues R93–K121.

This sequence belongs to the universal ribosomal protein uS13 family. In terms of assembly, part of the 30S ribosomal subunit. Forms a loose heterodimer with protein S19. Forms two bridges to the 50S subunit in the 70S ribosome.

Located at the top of the head of the 30S subunit, it contacts several helices of the 16S rRNA. In the 70S ribosome it contacts the 23S rRNA (bridge B1a) and protein L5 of the 50S subunit (bridge B1b), connecting the 2 subunits; these bridges are implicated in subunit movement. Contacts the tRNAs in the A and P-sites. In Methylibium petroleiphilum (strain ATCC BAA-1232 / LMG 22953 / PM1), this protein is Small ribosomal subunit protein uS13.